We begin with the raw amino-acid sequence, 873 residues long: Leucine--tRNA ligase (873 aa).

Residues 41–51 (PYPSGRIHMGH) carry the 'HIGH' region motif. A 'KMSKS' region motif is present at residues 645–649 (KMSKS). Lysine 648 is an ATP binding site.

Belongs to the class-I aminoacyl-tRNA synthetase family.

Its subcellular location is the cytoplasm. It catalyses the reaction tRNA(Leu) + L-leucine + ATP = L-leucyl-tRNA(Leu) + AMP + diphosphate. In Cereibacter sphaeroides (strain ATCC 17025 / ATH 2.4.3) (Rhodobacter sphaeroides), this protein is Leucine--tRNA ligase.